Reading from the N-terminus, the 534-residue chain is Monolignol oxidoreductase AtBBE-like 13 (534 aa).

Positions 1–29 (MAFVLMNNTNAFLVTLLLLSLSYIPLSFS) are cleaved as a signal peptide. N-linked (GlcNAc...) asparagine glycans are attached at residues Asn-7 and Asn-59. Cys-38 and Cys-102 form a disulfide bridge. Residues 117–181 (HDYEGLSYVS…KIHGFPAGLC (65 aa)) constitute a cross-link (6-(S-cysteinyl)-8alpha-(pros-histidyl)-FAD (His-Cys)).

The protein belongs to the oxygen-dependent FAD-linked oxidoreductase family. FAD is required as a cofactor. Post-translationally, the FAD cofactor is bound via a bicovalent 6-S-cysteinyl, 8alpha-N1-histidyl FAD linkage.

It is found in the secreted. The protein localises to the cell wall. The enzyme catalyses (E)-4-coumaroyl alcohol + A = (E)-4-coumaraldehyde + AH2. It carries out the reaction (E)-coniferol + A = (E)-coniferaldehyde + AH2. It catalyses the reaction (E)-sinapyl alcohol + A = (E)-sinapaldehyde + AH2. It functions in the pathway phenylpropanoid metabolism. Mediates oxidation of p-hydroxylated derivatives of cinnamyl alcohol (i.e. the monolignols p-coumaryl-, coniferyl-, and sinapyl alcohol) to their corresponding aldehydes. The electron acceptor required for these reactions is not known, but does not seem to be dioxygen. Is much less efficient towards cinnamyl alcohol. This chain is Monolignol oxidoreductase AtBBE-like 13, found in Arabidopsis thaliana (Mouse-ear cress).